The sequence spans 262 residues: MAIITMKSLLEAGVHFGHQVKRLDPRMKRFIFSERNEIHILDLQKTLQGIKDSYELVQRVIKDGKKVLFIGTKKQASEIIEQEARRSDMPYVNNRWLGGMLSNFNTIRKSVQKLKKLEKMEVDGTFDMISKKEISQLNREKLKLAKNLSGIKDMETLPGAVFIIDPKREQIAINEARKLKIPIISVVDTNCNPDVIDCPIPGNDDAIRSVALFTKIISDAILESDKEVGIQIIENLNEEDLMKEIEIKNDKSDSIEEGGNNL.

It belongs to the universal ribosomal protein uS2 family.

The polypeptide is Small ribosomal subunit protein uS2 (Borreliella afzelii (strain PKo) (Borrelia afzelii)).